Here is a 299-residue protein sequence, read N- to C-terminus: Tyrosine recombinase XerC (299 aa).

One can recognise a Core-binding (CB) domain in the interval 1–85 (MEQHLDAYCM…AVRGFYKYLN (85 aa)). In terms of domain architecture, Tyr recombinase spans 106–285 (RLPKTLDTDR…DFQHLATVYD (180 aa)). Catalysis depends on residues arginine 146, lysine 170, histidine 237, arginine 240, and histidine 263. Tyrosine 272 acts as the O-(3'-phospho-DNA)-tyrosine intermediate in catalysis.

The protein belongs to the 'phage' integrase family. XerC subfamily. In terms of assembly, forms a cyclic heterotetrameric complex composed of two molecules of XerC and two molecules of XerD.

The protein resides in the cytoplasm. Its function is as follows. Site-specific tyrosine recombinase, which acts by catalyzing the cutting and rejoining of the recombining DNA molecules. The XerC-XerD complex is essential to convert dimers of the bacterial chromosome into monomers to permit their segregation at cell division. It also contributes to the segregational stability of plasmids. The sequence is that of Tyrosine recombinase XerC from Pseudomonas savastanoi pv. phaseolicola (strain 1448A / Race 6) (Pseudomonas syringae pv. phaseolicola (strain 1448A / Race 6)).